A 273-amino-acid chain; its full sequence is Cell division cycle-associated protein 3 (273 aa).

2 disordered regions span residues 1-231 (MGST…ALSE) and 251-273 (GGGA…LMES). Phosphoserine occurs at positions 29 and 31. The segment covering 32-45 (AGIQRTPIQVESSP) has biased composition (polar residues). Residue T37 is modified to Phosphothreonine. A phosphoserine mark is found at S44 and S67. T75 is modified (phosphothreonine). The F-box-like stretch occupies residues 90 to 124 (KELSEVFETEVSETEVSESISSPVLGLPQETPLSS). Position 93 is a phosphoserine (S93). Acidic residues predominate over residues 94 to 105 (EVFETEVSETEV). Polar residues-rich tracts occupy residues 144 to 154 (PWSQTELNSKQ) and 164 to 175 (STETMVSGQTSD). S204 carries the phosphoserine modification. The residue at position 207 (T207) is a Phosphothreonine. Residues 210–220 (QDDNSPGTLTL) show a composition bias toward polar residues. Residue S214 is modified to Phosphoserine. Phosphothreonine is present on T217. A KEN box motif is present at residues 263 to 265 (KEN).

In terms of assembly, interacts with SKP1. Part of a SCF (SKP1-cullin-F-box) protein ligase complex. Ubiquitinated and degraded by the APC/C-Cdh1 complex.

It is found in the cytoplasm. Its subcellular location is the cytosol. The protein operates within protein modification; protein ubiquitination. In terms of biological role, F-box-like protein which is required for entry into mitosis. Acts by participating in E3 ligase complexes that mediate the ubiquitination and degradation of WEE1 kinase at G2/M phase. This is Cell division cycle-associated protein 3 (Cdca3) from Rattus norvegicus (Rat).